Consider the following 66-residue polypeptide: Toxin BomPI (66 aa).

The region spanning 2–64 (RDAYIAQPEN…VPIRIEGKCH (63 aa)) is the LCN-type CS-alpha/beta domain. 4 cysteine pairs are disulfide-bonded: Cys12–Cys63, Cys16–Cys36, Cys22–Cys46, and Cys26–Cys48.

It belongs to the long (4 C-C) scorpion toxin superfamily. Sodium channel inhibitor family. Alpha subfamily. In terms of tissue distribution, expressed by the venom gland.

The protein localises to the secreted. Its function is as follows. Alpha toxins bind voltage-independently at site-3 of sodium channels (Nav) and inhibit the inactivation of the activated channels, thereby blocking neuronal transmission. The polypeptide is Toxin BomPI (Buthus occitanus mardochei (Moroccan scorpion)).